Consider the following 289-residue polypeptide: Bifunctional protein FolD (289 aa).

Residues 165–167 and S190 each bind NADP(+); that span reads GAS.

This sequence belongs to the tetrahydrofolate dehydrogenase/cyclohydrolase family. As to quaternary structure, homodimer.

It carries out the reaction (6R)-5,10-methylene-5,6,7,8-tetrahydrofolate + NADP(+) = (6R)-5,10-methenyltetrahydrofolate + NADPH. The enzyme catalyses (6R)-5,10-methenyltetrahydrofolate + H2O = (6R)-10-formyltetrahydrofolate + H(+). The protein operates within one-carbon metabolism; tetrahydrofolate interconversion. In terms of biological role, catalyzes the oxidation of 5,10-methylenetetrahydrofolate to 5,10-methenyltetrahydrofolate and then the hydrolysis of 5,10-methenyltetrahydrofolate to 10-formyltetrahydrofolate. This Ralstonia pickettii (strain 12J) protein is Bifunctional protein FolD.